The chain runs to 478 residues: MSPQTETKASVGFKAGVKDYKLTYYTPEYETKDTDILAAFRVTPQPGVPPEEAGAAVAAESSTGTWTTVWTDGLTSLDRYKGRCYHIEPVPGEEDQYICYVAYPLDLFEEGSVTNMFTSIVGNVFGFKALRALRLEDLRIPPTYSKTFQGPPHGIQVERDKLNKYGRPLLGCTIKPKLGLSAKNYGRACYECLRGGLDFTKDDENVNSQPFMRWRDRFVFCAEAIYKAQAETGEIKGHYLNATAGTCEEMMKRAIFARELGVPIVMHDYLTGGFTANTSLAMYCRDNGLLLHIHRAMHAVIDRQKNHGMHFRVLAKALRMSGGDHVHAGTVVGKLEGEREITLGFVDLLRDDFIEKDRSRGVFFTQDWVSMPGVIPVASGGIHVWHMPALTEIFGDDSVLQFGGGTLGHPWGNAPGAAANRVALEACVQARNEGRDLAREGNEIIKAACKWSPELAAACEVWKAIKFEFAPVDTVDKV.

Residues 1-2 (MS) constitute a propeptide that is removed on maturation. Pro3 is subject to N-acetylproline. Position 14 is an N6,N6,N6-trimethyllysine (Lys14). Residues Asn123 and Thr173 each contribute to the substrate site. The active-site Proton acceptor is the Lys175. Residue Lys177 participates in substrate binding. 3 residues coordinate Mg(2+): Lys201, Asp203, and Glu204. N6-carboxylysine is present on Lys201. The active-site Proton acceptor is the His294. Arg295, His327, and Ser379 together coordinate substrate.

It belongs to the RuBisCO large chain family. Type I subfamily. As to quaternary structure, heterohexadecamer of 8 large chains and 8 small chains; disulfide-linked. The disulfide link is formed within the large subunit homodimers. Requires Mg(2+) as cofactor. In terms of processing, the disulfide bond which can form in the large chain dimeric partners within the hexadecamer appears to be associated with oxidative stress and protein turnover.

It is found in the plastid. The protein localises to the chloroplast. The enzyme catalyses 2 (2R)-3-phosphoglycerate + 2 H(+) = D-ribulose 1,5-bisphosphate + CO2 + H2O. The catalysed reaction is D-ribulose 1,5-bisphosphate + O2 = 2-phosphoglycolate + (2R)-3-phosphoglycerate + 2 H(+). Functionally, ruBisCO catalyzes two reactions: the carboxylation of D-ribulose 1,5-bisphosphate, the primary event in carbon dioxide fixation, as well as the oxidative fragmentation of the pentose substrate in the photorespiration process. Both reactions occur simultaneously and in competition at the same active site. This chain is Ribulose bisphosphate carboxylase large chain, found in Neurachne tenuifolia.